The following is a 50-amino-acid chain: Sperm protamine P1 (50 aa).

2 disulfides stabilise this stretch: cysteine 7–cysteine 15 and cysteine 39–cysteine 47.

Belongs to the protamine P1 family. As to quaternary structure, cross-linked by interchain disulfide bonds around the DNA-helix. As to expression, testis.

Its subcellular location is the nucleus. It localises to the chromosome. Protamines substitute for histones in the chromatin of sperm during the haploid phase of spermatogenesis. They compact sperm DNA into a highly condensed, stable and inactive complex. The chain is Sperm protamine P1 (PRM1) from Sus scrofa (Pig).